Here is a 234-residue protein sequence, read N- to C-terminus: Probable glycerol uptake facilitator protein (234 aa).

Helical transmembrane passes span 3–23 (VYLAEFLGTMLLIILGDGVVA) and 36–56 (GWIVITTGWGLAVAMSVYLVG). The NPA 1 motif lies at 64 to 66 (NPA). The next 3 membrane-spanning stretches (helical) occupy residues 82-102 (VPGYIFSQILGAFVGAILVYL), 134-154 (LLTEIIGTMVLLMGVLGIGAN), and 164-184 (LVGFLVWSIGLSLGGPTGYAI). An NPA 2 motif is present at residues 185 to 187 (NPA). The helical transmembrane segment at 214–234 (VPIIGPIIGGILGASLYNWLF) threads the bilayer.

This sequence belongs to the MIP/aquaporin (TC 1.A.8) family.

It is found in the cell membrane. It carries out the reaction glycerol(in) = glycerol(out). Its function is as follows. Mediates glycerol diffusion across the cytoplasmic membrane via a pore-type mechanism. The polypeptide is Probable glycerol uptake facilitator protein (glpF) (Thermotoga maritima (strain ATCC 43589 / DSM 3109 / JCM 10099 / NBRC 100826 / MSB8)).